The following is a 314-amino-acid chain: Deoxyribonuclease-1-like 1 (314 aa).

Positions 1–37 are cleaved as a signal peptide; the sequence is MPFGQPGFLWRVPDAHIAMRGLVMAPLLILLVGGTEA. Asn102 carries an N-linked (GlcNAc...) asparagine glycan. Glu113 is a catalytic residue. Asn133 carries an N-linked (GlcNAc...) asparagine glycan. His164 is an active-site residue. Cys203 and Cys240 form a disulfide bridge. N-linked (GlcNAc...) asparagine glycosylation occurs at Asn239.

The protein belongs to the DNase I family. In terms of tissue distribution, highly expressed in heart and skeletal muscles. Low expression in brain and thymus. Intermediated expression in other tissues.

It localises to the endoplasmic reticulum. The polypeptide is Deoxyribonuclease-1-like 1 (Dnase1l1) (Mus musculus (Mouse)).